A 247-amino-acid polypeptide reads, in one-letter code: ATP synthase subunit a, chloroplastic (247 aa).

5 helical membrane-spanning segments follow: residues 38 to 58, 95 to 115, 134 to 154, 199 to 219, and 220 to 240; these read QVLI…AIAV, VPFI…GALL, INTT…AGLT, LVVV…VMFL, and GLFT…AYIG.

This sequence belongs to the ATPase A chain family. As to quaternary structure, F-type ATPases have 2 components, CF(1) - the catalytic core - and CF(0) - the membrane proton channel. CF(1) has five subunits: alpha(3), beta(3), gamma(1), delta(1), epsilon(1). CF(0) has four main subunits: a, b, b' and c.

The protein localises to the plastid. It localises to the chloroplast thylakoid membrane. In terms of biological role, key component of the proton channel; it plays a direct role in the translocation of protons across the membrane. The sequence is that of ATP synthase subunit a, chloroplastic from Calycanthus floridus var. glaucus (Eastern sweetshrub).